The sequence spans 748 residues: Catalase-peroxidase (748 aa).

A cross-link (tryptophyl-tyrosyl-methioninium (Trp-Tyr) (with M-268)) is located at residues 91–242; that stretch reads WHSAGTYRIG…LAAVQMGLIY (152 aa). H92 functions as the Proton acceptor in the catalytic mechanism. The tract at residues 194 to 223 is disordered; sequence DRYGKGKGSSSQGEIPADAHRHGQEQARTA. A cross-link (tryptophyl-tyrosyl-methioninium (Tyr-Met) (with W-91)) is located at residues 242-268; sequence YVNPEGPEGNPDPLAAAHDIRETFARM. H283 lines the heme b pocket. The tract at residues 288–310 is disordered; it reads THGAGDAKHVGREPEGEDMDSQG. The segment covering 290–301 has biased composition (basic and acidic residues); that stretch reads GAGDAKHVGREP.

Belongs to the peroxidase family. Peroxidase/catalase subfamily. In terms of assembly, homodimer or homotetramer. The cofactor is heme b. Formation of the three residue Trp-Tyr-Met cross-link is important for the catalase, but not the peroxidase activity of the enzyme.

The catalysed reaction is H2O2 + AH2 = A + 2 H2O. It carries out the reaction 2 H2O2 = O2 + 2 H2O. Bifunctional enzyme with both catalase and broad-spectrum peroxidase activity. The sequence is that of Catalase-peroxidase from Herbaspirillum seropedicae.